A 274-amino-acid chain; its full sequence is 2,3,4,5-tetrahydropyridine-2,6-dicarboxylate N-succinyltransferase (274 aa).

Substrate is bound by residues arginine 104 and aspartate 141.

The protein belongs to the transferase hexapeptide repeat family. As to quaternary structure, homotrimer.

The protein resides in the cytoplasm. The enzyme catalyses (S)-2,3,4,5-tetrahydrodipicolinate + succinyl-CoA + H2O = (S)-2-succinylamino-6-oxoheptanedioate + CoA. The protein operates within amino-acid biosynthesis; L-lysine biosynthesis via DAP pathway; LL-2,6-diaminopimelate from (S)-tetrahydrodipicolinate (succinylase route): step 1/3. The polypeptide is 2,3,4,5-tetrahydropyridine-2,6-dicarboxylate N-succinyltransferase (Yersinia pestis).